A 236-amino-acid polypeptide reads, in one-letter code: MKYKLLPCLLAILLTGCDRTEVTLSFTPEMASFSNEFDFDPLRGPVKDFTQTLMDEQGEVTKRVSGTLSEEGCFDSLELLDLENNTLVALVLDANYYRDAETLEKRVRLQGKCQLAELPSAGVSWETDDNGFVIKASSKQMQMEYRYDDQGYPLGKTTTSNDKTLSVSATPSTDPIKKLDYTAVTLLNNQRVGNVKQSCEYDNHANPVDCQLIIVDEGVKPAVERVYTIKNTIDYY.

The first 16 residues, 1 to 16 (MKYKLLPCLLAILLTG), serve as a signal peptide directing secretion. A lipid anchor (N-palmitoyl cysteine) is attached at cysteine 17. The S-diacylglycerol cysteine moiety is linked to residue cysteine 17.

It belongs to the UPF0257 family.

It is found in the cell membrane. The chain is UPF0257 lipoprotein YnfC from Escherichia coli O127:H6 (strain E2348/69 / EPEC).